A 553-amino-acid polypeptide reads, in one-letter code: Glucose-6-phosphate isomerase (553 aa).

Catalysis depends on Glu-355, which acts as the Proton donor. Residues His-386 and Lys-513 contribute to the active site.

Belongs to the GPI family.

It localises to the cytoplasm. It catalyses the reaction alpha-D-glucose 6-phosphate = beta-D-fructose 6-phosphate. It participates in carbohydrate biosynthesis; gluconeogenesis. It functions in the pathway carbohydrate degradation; glycolysis; D-glyceraldehyde 3-phosphate and glycerone phosphate from D-glucose: step 2/4. Functionally, catalyzes the reversible isomerization of glucose-6-phosphate to fructose-6-phosphate. This chain is Glucose-6-phosphate isomerase, found in Baumannia cicadellinicola subsp. Homalodisca coagulata.